A 182-amino-acid chain; its full sequence is NAD(P)H-quinone oxidoreductase subunit I, chloroplastic (182 aa).

2 consecutive 4Fe-4S ferredoxin-type domains span residues 52-81 (GRIH…VDWE) and 92-121 (KSYS…MTEE). Residues C61, C64, C67, C71, C101, C104, C107, and C111 each coordinate [4Fe-4S] cluster.

This sequence belongs to the complex I 23 kDa subunit family. In terms of assembly, NDH is composed of at least 16 different subunits, 5 of which are encoded in the nucleus. It depends on [4Fe-4S] cluster as a cofactor.

Its subcellular location is the plastid. The protein resides in the chloroplast thylakoid membrane. It carries out the reaction a plastoquinone + NADH + (n+1) H(+)(in) = a plastoquinol + NAD(+) + n H(+)(out). The enzyme catalyses a plastoquinone + NADPH + (n+1) H(+)(in) = a plastoquinol + NADP(+) + n H(+)(out). Its function is as follows. NDH shuttles electrons from NAD(P)H:plastoquinone, via FMN and iron-sulfur (Fe-S) centers, to quinones in the photosynthetic chain and possibly in a chloroplast respiratory chain. The immediate electron acceptor for the enzyme in this species is believed to be plastoquinone. Couples the redox reaction to proton translocation, and thus conserves the redox energy in a proton gradient. This chain is NAD(P)H-quinone oxidoreductase subunit I, chloroplastic, found in Chaetosphaeridium globosum (Charophycean green alga).